Here is a 1094-residue protein sequence, read N- to C-terminus: Probable arabinosyltransferase C (1094 aa).

Transmembrane regions (helical) follow at residues 28-50, 232-251, 264-286, 341-360, 373-392, 431-453, 466-488, 530-552, 565-582, 586-608, 620-642, 657-679, and 700-722; these read IARY…TPLL, AAMI…LHIL, PARW…WWHF, SIWM…WVIS, TSRA…WLPL, IGAL…LVAI, RFGV…IPIF, SIAR…AMSL, SRRI…MMFT, WTHH…AVAV, TVFA…GWWY, WRWS…AAWF, and LAGI…EVVS. Positions 817–831 are enriched in low complexity; the sequence is GSEPGTEGGTTAAPG. Positions 817–836 are disordered; sequence GSEPGTEGGTTAAPGINGSR.

This sequence belongs to the emb family.

It localises to the cell membrane. Its function is as follows. Arabinosyl transferase responsible for the polymerization of arabinose into the arabinan of arabinogalactan. In Mycobacterium tuberculosis (strain ATCC 25618 / H37Rv), this protein is Probable arabinosyltransferase C (embC).